We begin with the raw amino-acid sequence, 122 residues long: Large ribosomal subunit protein uL14 (122 aa).

The protein belongs to the universal ribosomal protein uL14 family. In terms of assembly, part of the 50S ribosomal subunit. Forms a cluster with proteins L3 and L19. In the 70S ribosome, L14 and L19 interact and together make contacts with the 16S rRNA in bridges B5 and B8.

Functionally, binds to 23S rRNA. Forms part of two intersubunit bridges in the 70S ribosome. The polypeptide is Large ribosomal subunit protein uL14 (Methylobacterium radiotolerans (strain ATCC 27329 / DSM 1819 / JCM 2831 / NBRC 15690 / NCIMB 10815 / 0-1)).